Here is a 762-residue protein sequence, read N- to C-terminus: Palmitoyltransferase ZDHHC8 (762 aa).

Residues 1 to 13 lie on the Cytoplasmic side of the membrane; sequence MPRSPGTRLKPAK. The chain crosses the membrane as a helical span at residues 14 to 34; that stretch reads YIPVATAAALLVGSSTLFFVF. Residues 35 to 52 lie on the Lumenal side of the membrane; sequence TCPWLTRAVSPAIPVYNG. Residues 53 to 73 form a helical membrane-spanning segment; the sequence is ILFLFVLANFSMATFMDPGVF. The Cytoplasmic segment spans residues 74 to 148; the sequence is PRADEDEDKE…NCIGRRNYRY (75 aa). In terms of domain architecture, DHHC spans 104-154; it reads KWCATCHFYRPPRCSHCSVCDNCVEDFDHHCPWVNNCIGRRNYRYFFLFLL. The S-palmitoyl cysteine intermediate role is filled by cysteine 134. The helical transmembrane segment at 149–169 threads the bilayer; the sequence is FFLFLLSLSAHMVGVVAFGLL. Residues 170-190 are Lumenal-facing; sequence YVLNHSEGLGAAHTTITMAVM. Residues 191-211 form a helical membrane-spanning segment; sequence CVAGLFFIPVIGLTGFHVVLV. Residues 212-762 lie on the Cytoplasmic side of the membrane; it reads TRGRTTNEQV…VGGTTYEISV (551 aa). 4 disordered regions span residues 289–350, 362–423, 436–537, and 551–574; these read GLKA…PPTP, GPKT…TTDA, ASRR…SPVR, and ERKD…GDSG. Serine 335 is subject to Phosphoserine. Positions 408–417 are enriched in pro residues; sequence LRPPYPPSPP. An Omega-N-methylarginine modification is found at arginine 439. Residues 471–485 show a composition bias toward polar residues; the sequence is RNGSLSYDSLLNPGS. The span at 511-521 shows a compositional bias: pro residues; the sequence is PSDPPRPPPRS. Positions 551 to 562 are enriched in basic and acidic residues; it reads ERKDREERERLL. Phosphoserine is present on residues serine 603 and serine 624. A compositionally biased stretch (low complexity) spans 626-644; the sequence is SSLSSSMSRAPRTSSSSLQ. Disordered regions lie at residues 626 to 684 and 707 to 744; these read SSLS…SYTG and DHPQ…PARH. Phosphoserine is present on residues serine 672, serine 679, serine 722, and serine 740.

This sequence belongs to the DHHC palmitoyltransferase family. ERF2/ZDHHC9 subfamily. Expressed in brain cortex and hippocampus.

It localises to the golgi apparatus membrane. The protein resides in the mitochondrion membrane. It carries out the reaction L-cysteinyl-[protein] + hexadecanoyl-CoA = S-hexadecanoyl-L-cysteinyl-[protein] + CoA. Palmitoyltransferase that catalyzes the addition of palmitate onto various protein substrates and therefore functions in several unrelated biological processes. Through the palmitoylation of ABCA1 regulates the localization of the transporter to the plasma membrane and thereby regulates its function in cholesterol and phospholipid efflux. Could also pamitoylate the D(2) dopamine receptor DRD2 and regulate its stability and localization to the plasma membrane. Could also play a role in glutamatergic transmission. The sequence is that of Palmitoyltransferase ZDHHC8 from Mus musculus (Mouse).